Reading from the N-terminus, the 207-residue chain is NADH-quinone oxidoreductase subunit C (207 aa).

It belongs to the complex I 30 kDa subunit family. NDH-1 is composed of 14 different subunits. Subunits NuoB, C, D, E, F, and G constitute the peripheral sector of the complex.

It is found in the cell inner membrane. It catalyses the reaction a quinone + NADH + 5 H(+)(in) = a quinol + NAD(+) + 4 H(+)(out). Its function is as follows. NDH-1 shuttles electrons from NADH, via FMN and iron-sulfur (Fe-S) centers, to quinones in the respiratory chain. The immediate electron acceptor for the enzyme in this species is believed to be ubiquinone. Couples the redox reaction to proton translocation (for every two electrons transferred, four hydrogen ions are translocated across the cytoplasmic membrane), and thus conserves the redox energy in a proton gradient. The sequence is that of NADH-quinone oxidoreductase subunit C from Jannaschia sp. (strain CCS1).